A 209-amino-acid chain; its full sequence is Thymidylate kinase (209 aa).

Gly7 to Ser14 serves as a coordination point for ATP.

It belongs to the thymidylate kinase family.

The catalysed reaction is dTMP + ATP = dTDP + ADP. Phosphorylation of dTMP to form dTDP in both de novo and salvage pathways of dTTP synthesis. In Solidesulfovibrio magneticus (strain ATCC 700980 / DSM 13731 / RS-1) (Desulfovibrio magneticus), this protein is Thymidylate kinase.